The sequence spans 334 residues: 4-hydroxy-2-methyl-3-oxo-4-farnesyl-3,4-dihydroquinoline-1-oxide ketoreductase (334 aa).

Y139 serves as the catalytic Proton donor.

This sequence belongs to the 3-beta-HSD family.

The catalysed reaction is aurachin B + NAD(+) + H2O = 4-hydroxy-2-methyl-3-oxo-4-[(2E,6E)-farnesyl]-3,4-dihydroquinoline 1-oxide + NADH. The enzyme catalyses 3,4-dihydroxy-2-methyl-4-[(2E,6E)-farnesyl]-3,4-dihydroquinoline 1-oxide + NAD(+) = 4-hydroxy-2-methyl-3-oxo-4-[(2E,6E)-farnesyl]-3,4-dihydroquinoline 1-oxide + NADH + H(+). Its function is as follows. Ketoreductase that catalyzes the final step in the conversion of aurachin C to aurachin B. Catalyzes the reduction of 4-hydroxy-2-methyl-3-oxo-4-[(2E,6E)-farnesyl]-3,4-dihydroquinoline-1-oxide to form 3,4-dihydroxy-2-methyl-4-[(2E,6E)-farnesyl]-3,4-dihydroquinoline 1-oxide, which then undergoes a spontaneous dehydration to form aurachin B. Accepts both NADH and NADPH, but has a preference for NADH. This is 4-hydroxy-2-methyl-3-oxo-4-farnesyl-3,4-dihydroquinoline-1-oxide ketoreductase from Stigmatella aurantiaca.